We begin with the raw amino-acid sequence, 803 residues long: Ras GTPase-activating protein 4 (803 aa).

C2 domains follow at residues 1-105 and 116-232; these read MAKR…SGWA and VQGE…EGWF. The Ca(2+) site is built by Asp-21, Asp-27, Asp-74, Asp-76, Ser-79, Asp-82, Asp-149, Asp-155, Asp-202, Asp-204, Ser-207, and Asp-210. Residues 318–546 enclose the Ras-GAP domain; the sequence is GLAKDFLDLL…AQLKDFITKL (229 aa). The PH domain maps to 566–673; it reads PPVKEGPLFI…WLSALRKVSI (108 aa). Residues 675–711 form a Btk-type zinc finger; sequence NTGLLGSYHPGVFRGDKWSCCHQKEKTGQGCDKTRSR. The Zn(2+) site is built by His-683, Cys-694, Cys-695, and Cys-705. Residues 781–803 form a disordered region; the sequence is EAHSSSPAGSPPSEPNCLLELQT.

Requires Ca(2+) as cofactor. Widely expressed.

It localises to the cytoplasm. The protein resides in the cytosol. It is found in the cell membrane. In terms of biological role, ca(2+)-dependent Ras GTPase-activating protein, that switches off the Ras-MAPK pathway following a stimulus that elevates intracellular calcium. Functions as an adaptor for Cdc42 and Rac1 during FcR-mediated phagocytosis. The chain is Ras GTPase-activating protein 4 (RASA4) from Homo sapiens (Human).